Here is a 194-residue protein sequence, read N- to C-terminus: Large ribosomal subunit protein bL9 (194 aa).

Residues 166–184 (AENQAQADEQAGELAAAAA) are compositionally biased toward low complexity. The tract at residues 166 to 194 (AENQAQADEQAGELAAAAAERGDMGGDEE) is disordered. Basic and acidic residues predominate over residues 185 to 194 (ERGDMGGDEE).

The protein belongs to the bacterial ribosomal protein bL9 family.

Functionally, binds to the 23S rRNA. This chain is Large ribosomal subunit protein bL9, found in Hyphomonas neptunium (strain ATCC 15444).